Here is a 410-residue protein sequence, read N- to C-terminus: Acetate kinase (410 aa).

Asn-7 lines the Mg(2+) pocket. Lys-14 contributes to the ATP binding site. Arg-98 contributes to the substrate binding site. Asp-155 (proton donor/acceptor) is an active-site residue. Residues 215-219 (HLGNG), 290-292 (DMR), and 338-342 (GIGEN) contribute to the ATP site. Glu-392 is a binding site for Mg(2+).

The protein belongs to the acetokinase family. In terms of assembly, homodimer. The cofactor is Mg(2+). Mn(2+) serves as cofactor.

It localises to the cytoplasm. It carries out the reaction acetate + ATP = acetyl phosphate + ADP. Its pathway is metabolic intermediate biosynthesis; acetyl-CoA biosynthesis; acetyl-CoA from acetate: step 1/2. In terms of biological role, catalyzes the formation of acetyl phosphate from acetate and ATP. Can also catalyze the reverse reaction. In Kocuria rhizophila (strain ATCC 9341 / DSM 348 / NBRC 103217 / DC2201), this protein is Acetate kinase.